Reading from the N-terminus, the 162-residue chain is Caveolin-2 (162 aa).

The Cytoplasmic segment spans residues methionine 1 to lysine 86. Residue tyrosine 19 is modified to Phosphotyrosine; by SRC. Phosphoserine occurs at positions 20 and 23. Position 27 is a phosphotyrosine (tyrosine 27). Position 36 is a phosphoserine (serine 36). The segment at residues phenylalanine 87 to leucine 107 is an intramembrane region (helical). Topologically, residues serine 108 to aspartate 162 are cytoplasmic.

The protein belongs to the caveolin family. As to quaternary structure, monomer or homodimer. Interacts with CAV1; the interaction forms a stable heterooligomeric complex that is required for targeting to lipid rafts and for caveolae formation. Tyrosine phosphorylated forms do not form heterooligomers with the Tyr-19-phosphorylated form existing as a monomer or dimer, and the Tyr-27-form as a monomer only. Interacts (tyrosine phosphorylated form) with the SH2 domain-containing proteins, RASA1, NCK1 and SRC. Interacts (tyrosine phosphorylated form) with INSR, the interaction (Tyr-27-phosphorylated form) is increased on insulin stimulation. Interacts (Tyr-19 phosphorylated form) with MAPK1 (phosphorylated form); the interaction, promoted by insulin, leads to nuclear location and MAPK1 activation. Interacts with STAT3; the interaction is increased on insulin-induced tyrosine phosphorylation leading to STAT activation. Post-translationally, phosphorylated on serine and tyrosine residues. CAV1 promotes phosphorylation on Ser-23 which then targets the complex to the plasma membrane, lipid rafts and caveolae. Phosphorylation on Ser-36 appears to modulate mitosis in endothelial cells. Phosphorylation on both Tyr-19 and Tyr-27 is required for insulin-induced 'Ser-727' phosphorylation of STAT3 and its activation. Phosphorylation on Tyr-19 is required for insulin-induced phosphorylation of MAPK1 and DNA binding of STAT3. Tyrosine phosphorylation is induced by both EGF and insulin.

It localises to the nucleus. The protein localises to the cytoplasm. The protein resides in the golgi apparatus membrane. It is found in the cell membrane. Its subcellular location is the membrane. It localises to the caveola. Functionally, may act as a scaffolding protein within caveolar membranes. Interacts directly with G-protein alpha subunits and can functionally regulate their activity. Acts as an accessory protein in conjunction with CAV1 in targeting to lipid rafts and driving caveolae formation. The Ser-36 phosphorylated form has a role in modulating mitosis in endothelial cells. Positive regulator of cellular mitogenesis of the MAPK signaling pathway. Required for the insulin-stimulated nuclear translocation and activation of MAPK1 and STAT3, and the subsequent regulation of cell cycle progression. The polypeptide is Caveolin-2 (Cav2) (Mus musculus (Mouse)).